A 687-amino-acid chain; its full sequence is Glycine--tRNA ligase beta subunit (687 aa).

It belongs to the class-II aminoacyl-tRNA synthetase family. Tetramer of two alpha and two beta subunits.

It localises to the cytoplasm. The catalysed reaction is tRNA(Gly) + glycine + ATP = glycyl-tRNA(Gly) + AMP + diphosphate. The polypeptide is Glycine--tRNA ligase beta subunit (Neisseria gonorrhoeae (strain NCCP11945)).